Consider the following 239-residue polypeptide: Pyridoxine 5'-phosphate synthase (239 aa).

Asparagine 9 provides a ligand contact to 3-amino-2-oxopropyl phosphate. Position 11–12 (aspartate 11–histidine 12) interacts with 1-deoxy-D-xylulose 5-phosphate. Arginine 20 contributes to the 3-amino-2-oxopropyl phosphate binding site. The Proton acceptor role is filled by histidine 45. 1-deoxy-D-xylulose 5-phosphate is bound by residues arginine 47 and histidine 52. Residue glutamate 72 is the Proton acceptor of the active site. Threonine 102 is a binding site for 1-deoxy-D-xylulose 5-phosphate. The active-site Proton donor is the histidine 189. Residues glycine 190 and glycine 211–histidine 212 each bind 3-amino-2-oxopropyl phosphate.

This sequence belongs to the PNP synthase family. In terms of assembly, homooctamer; tetramer of dimers.

It localises to the cytoplasm. It carries out the reaction 3-amino-2-oxopropyl phosphate + 1-deoxy-D-xylulose 5-phosphate = pyridoxine 5'-phosphate + phosphate + 2 H2O + H(+). It functions in the pathway cofactor biosynthesis; pyridoxine 5'-phosphate biosynthesis; pyridoxine 5'-phosphate from D-erythrose 4-phosphate: step 5/5. Functionally, catalyzes the complicated ring closure reaction between the two acyclic compounds 1-deoxy-D-xylulose-5-phosphate (DXP) and 3-amino-2-oxopropyl phosphate (1-amino-acetone-3-phosphate or AAP) to form pyridoxine 5'-phosphate (PNP) and inorganic phosphate. The chain is Pyridoxine 5'-phosphate synthase from Ehrlichia chaffeensis (strain ATCC CRL-10679 / Arkansas).